Here is a 284-residue protein sequence, read N- to C-terminus: RNase adapter protein RapZ (284 aa).

An ATP-binding site is contributed by 8–15 (GRSGSGKS). 56–59 (DVRN) contacts GTP. The tract at residues 266-284 (RSRGKNVQSRHRTLEKRKP) is RNA-binding.

This sequence belongs to the RapZ-like family. RapZ subfamily. In terms of assembly, homotrimer.

In terms of biological role, modulates the synthesis of GlmS, by affecting the processing and stability of the regulatory small RNA GlmZ. When glucosamine-6-phosphate (GlcN6P) concentrations are high in the cell, RapZ binds GlmZ and targets it to cleavage by RNase E. Consequently, GlmZ is inactivated and unable to activate GlmS synthesis. Under low GlcN6P concentrations, RapZ is sequestered and inactivated by an other regulatory small RNA, GlmY, preventing GlmZ degradation and leading to synthesis of GlmS. The polypeptide is RNase adapter protein RapZ (Escherichia coli O1:K1 / APEC).